The primary structure comprises 311 residues: tRNA (cytosine(49)-C(5))-methyltransferase (311 aa).

Residues 118–124 (AAAPGSK), Asp-142, Asp-169, and Asp-186 contribute to the S-adenosyl-L-methionine site. Cys-239 functions as the Nucleophile in the catalytic mechanism.

This sequence belongs to the class I-like SAM-binding methyltransferase superfamily. RsmB/NOP family. In terms of assembly, forms a tripartite complex with archease and tRNA. Binds only the oligomeric forms of the archease.

The protein resides in the cytoplasm. The catalysed reaction is cytidine(49) in tRNA precursor + S-adenosyl-L-methionine = 5-methylcytidine(49) in tRNA precursor + S-adenosyl-L-homocysteine + H(+). Substrate specificity and tendency to aggregate are influenced by archease. Functionally, catalyzes AdoMet-dependent formation of m5C in tRNA. In the presence of protein archease, specifically methylates the cytosine at position 49 (m5C49) of tRNA. In the absence of archease, catalyzes the formation of m5C at many locations in tRNAs or rRNAs. The sequence is that of tRNA (cytosine(49)-C(5))-methyltransferase from Pyrococcus abyssi (strain GE5 / Orsay).